A 465-amino-acid polypeptide reads, in one-letter code: MTDSPPCSSDSASSVPSQLHYHLMGIGGIGVSAFARLLAARGVRVSGCDTQPSELTEQLVREGIPVALGHDPAHVTGVDVLIASEAVPKNHPELVAARGAGVEVRPRMALLDELLRAGPSVGVIGTHGKTTTTSMIAVAMQGAGLDPAAFVGGIVPEFGSNVRLGTGPFVAEVDESDRGFAVLSCETAVFTNAEDDHVGGNQATYWETVEQQHAAFARFVGQARRVLYCADWPGLDQLVTTSGERLNYGLAEGADYRAVDLRPDAEGTTFTVARRGEVLGEARVGLPGLHNVLNALAALAVTDLYGGNFQTAAAALAAFRGPGRRWQRIGELNGALIIDDYAHNATKVAAAVQAARQTGRRVRVVFQPHRYLRTQQSWPRLADALMGADEVLVLDIATASEPPIPGIHATLVSDRMAQSGHTGVRYAPDRAEVVRYLRETACADDVIVTMGAGDVWKLSRELASV.

125-131 serves as a coordination point for ATP; sequence GTHGKTT.

This sequence belongs to the MurCDEF family.

The protein resides in the cytoplasm. The enzyme catalyses UDP-N-acetyl-alpha-D-muramate + L-alanine + ATP = UDP-N-acetyl-alpha-D-muramoyl-L-alanine + ADP + phosphate + H(+). The protein operates within cell wall biogenesis; peptidoglycan biosynthesis. In terms of biological role, cell wall formation. The sequence is that of UDP-N-acetylmuramate--L-alanine ligase from Deinococcus geothermalis (strain DSM 11300 / CIP 105573 / AG-3a).